The primary structure comprises 1224 residues: Coatomer subunit alpha (1224 aa).

WD repeat units follow at residues 3–38 (TKFE…LWDY), 42–80 (TLID…VWNY), 84–122 (RCLF…VWNW), and 126–164 (TCVC…VWDI). S173 is modified (phosphoserine). A Phosphothreonine modification is found at T185. WD repeat units lie at residues 195-234 (AVVK…IWRM), 241-278 (EVDT…VWDM), and 282-319 (TGVQ…VFKL). Phosphoserine is present on S402. Phosphothreonine is present on T591. The residue at position 895 (S895) is a Phosphoserine. R965 is subject to Omega-N-methylarginine. Residue S1193 is modified to Phosphoserine.

In terms of assembly, oligomeric complex that consists of at least the alpha, beta, beta', gamma, delta, epsilon and zeta subunits. Interacts with SCYL1. Interacts with JAGN1. Interacts with TMEM41B. Interacts with SVEP1. Probably interacts with PEX11A. Uniformly expressed in a wide range of adult and fetal tissues. Xenin is found in gastric, duodenal and jejunal mucosa. Circulates in the blood. Seems to be confined to specific endocrine cells.

It localises to the cytoplasm. The protein localises to the golgi apparatus membrane. Its subcellular location is the cytoplasmic vesicle. It is found in the COPI-coated vesicle membrane. The protein resides in the secreted. Its function is as follows. The coatomer is a cytosolic protein complex that binds to dilysine motifs and reversibly associates with Golgi non-clathrin-coated vesicles, which further mediate biosynthetic protein transport from the ER, via the Golgi up to the trans Golgi network. Coatomer complex is required for budding from Golgi membranes, and is essential for the retrograde Golgi-to-ER transport of dilysine-tagged proteins. In mammals, the coatomer can only be recruited by membranes associated to ADP-ribosylation factors (ARFs), which are small GTP-binding proteins; the complex also influences the Golgi structural integrity, as well as the processing, activity, and endocytic recycling of LDL receptors. Functionally, xenin stimulates exocrine pancreatic secretion. It inhibits pentagastrin-stimulated secretion of acid, to induce exocrine pancreatic secretion and to affect small and large intestinal motility. In the gut, xenin interacts with the neurotensin receptor. This Homo sapiens (Human) protein is Coatomer subunit alpha (COPA).